Reading from the N-terminus, the 391-residue chain is Processive diacylglycerol beta-glucosyltransferase (391 aa).

Belongs to the glycosyltransferase 28 family. UgtP subfamily.

Its subcellular location is the cell membrane. The enzyme catalyses a 1,2-diacyl-3-O-(beta-D-glucopyranosyl)-sn-glycerol + UDP-alpha-D-glucose = a 1,2-diacyl-3-O-(beta-D-Glc-(1-&gt;6)-beta-D-Glc)-sn-glycerol + UDP + H(+). The catalysed reaction is a 1,2-diacyl-sn-glycerol + UDP-alpha-D-glucose = a 1,2-diacyl-3-O-(beta-D-glucopyranosyl)-sn-glycerol + UDP + H(+). The protein operates within glycolipid metabolism; diglucosyl-diacylglycerol biosynthesis. In terms of biological role, processive glucosyltransferase involved in the biosynthesis of both the bilayer- and non-bilayer-forming membrane glucolipids. Is able to successively transfer two glucosyl residues to diacylglycerol (DAG), thereby catalyzing the formation of beta-monoglucosyl-DAG (3-O-(beta-D-glucopyranosyl)-1,2-diacyl-sn-glycerol) and beta-diglucosyl-DAG (3-O-(beta-D-glucopyranosyl-beta-(1-&gt;6)-D-glucopyranosyl)-1,2-diacyl-sn-glycerol). Beta-diglucosyl-DAG is the predominant glycolipid found in Bacillales and is also used as a membrane anchor for lipoteichoic acid (LTA). The sequence is that of Processive diacylglycerol beta-glucosyltransferase from Staphylococcus haemolyticus (strain JCSC1435).